Consider the following 366-residue polypeptide: Purple acid phosphatase 3 (366 aa).

The N-terminal stretch at 1–32 (MTYIYRDTKITTKSTIPFLIFFLFCFSNLSMA) is a signal peptide. D81 contributes to the Fe cation binding site. An N-linked (GlcNAc...) asparagine glycan is attached at N89. Positions 114 and 117 each coordinate Fe cation. A Zn(2+)-binding site is contributed by D114. Residues N152 and H246 each contribute to the Zn(2+) site. The active-site Proton donor is the H255. H281 contacts Zn(2+). Position 281–283 (281–283 (HDH)) interacts with substrate. H283 contributes to the Fe cation binding site.

This sequence belongs to the metallophosphoesterase superfamily. Purple acid phosphatase family. In terms of assembly, homodimer. It depends on Fe cation as a cofactor. Zn(2+) serves as cofactor. Expressed in stems, leaves, flowers and siliques.

The protein localises to the secreted. It carries out the reaction a phosphate monoester + H2O = an alcohol + phosphate. This is Purple acid phosphatase 3 (PAP3) from Arabidopsis thaliana (Mouse-ear cress).